The primary structure comprises 647 residues: Threonine--tRNA ligase (647 aa).

Residues 1–61 enclose the TGS domain; sequence MIKITFPDGA…EEDGSIEIVT (61 aa). A catalytic region spans residues 240–538; the sequence is DHRKLGKELD…LIETYKGAFP (299 aa). Residues C334, H385, and H515 each coordinate Zn(2+).

Belongs to the class-II aminoacyl-tRNA synthetase family. In terms of assembly, homodimer. Zn(2+) serves as cofactor.

It localises to the cytoplasm. The catalysed reaction is tRNA(Thr) + L-threonine + ATP = L-threonyl-tRNA(Thr) + AMP + diphosphate + H(+). In terms of biological role, catalyzes the attachment of threonine to tRNA(Thr) in a two-step reaction: L-threonine is first activated by ATP to form Thr-AMP and then transferred to the acceptor end of tRNA(Thr). Also edits incorrectly charged L-seryl-tRNA(Thr). The sequence is that of Threonine--tRNA ligase from Streptococcus pyogenes serotype M49 (strain NZ131).